The sequence spans 112 residues: UPF0102 protein CFF8240_0294 (112 aa).

It belongs to the UPF0102 family.

This is UPF0102 protein CFF8240_0294 from Campylobacter fetus subsp. fetus (strain 82-40).